Reading from the N-terminus, the 476-residue chain is Bifunctional protein HldE (476 aa).

A ribokinase region spans residues 1-318 (MKPILPDYSQ…AEAIHGSQDT (318 aa)). 195-198 (NMAE) is a binding site for ATP. Asp264 is a catalytic residue. Residues 344–476 (MTNGCFDILH…IIKAIKGGRG (133 aa)) form a cytidylyltransferase region.

The protein in the N-terminal section; belongs to the carbohydrate kinase PfkB family. This sequence in the C-terminal section; belongs to the cytidylyltransferase family. In terms of assembly, homodimer.

The catalysed reaction is D-glycero-beta-D-manno-heptose 7-phosphate + ATP = D-glycero-beta-D-manno-heptose 1,7-bisphosphate + ADP + H(+). It carries out the reaction D-glycero-beta-D-manno-heptose 1-phosphate + ATP + H(+) = ADP-D-glycero-beta-D-manno-heptose + diphosphate. It participates in nucleotide-sugar biosynthesis; ADP-L-glycero-beta-D-manno-heptose biosynthesis; ADP-L-glycero-beta-D-manno-heptose from D-glycero-beta-D-manno-heptose 7-phosphate: step 1/4. Its pathway is nucleotide-sugar biosynthesis; ADP-L-glycero-beta-D-manno-heptose biosynthesis; ADP-L-glycero-beta-D-manno-heptose from D-glycero-beta-D-manno-heptose 7-phosphate: step 3/4. Functionally, catalyzes the phosphorylation of D-glycero-D-manno-heptose 7-phosphate at the C-1 position to selectively form D-glycero-beta-D-manno-heptose-1,7-bisphosphate. Catalyzes the ADP transfer from ATP to D-glycero-beta-D-manno-heptose 1-phosphate, yielding ADP-D-glycero-beta-D-manno-heptose. The sequence is that of Bifunctional protein HldE from Vibrio atlanticus (strain LGP32) (Vibrio splendidus (strain Mel32)).